We begin with the raw amino-acid sequence, 260 residues long: Putative methylesterase 19 (260 aa).

The Acyl-ester intermediate role is filled by serine 81. Active-site charge relay system residues include aspartate 210 and histidine 238.

Belongs to the AB hydrolase superfamily. Methylesterase family.

In terms of biological role, putative methylesterase. This is Putative methylesterase 19 from Arabidopsis thaliana (Mouse-ear cress).